Reading from the N-terminus, the 361-residue chain is Neuronal-specific septin-3 (361 aa).

The segment at 1 to 46 (MSEIVPPEVRPKPAVPAKPSHVAPPSSAPFVPSPQGTGGEGQGSGR) is disordered. Positions 15-34 (VPAKPSHVAPPSSAPFVPSP) are enriched in low complexity. Over residues 36 to 46 (GTGGEGQGSGR) the composition is skewed to gly residues. The region spanning 70 to 342 (AGFDFNIMVV…ETYRAKRLND (273 aa)) is the Septin-type G domain. The G1 motif stretch occupies residues 80–87 (GQSGLGKS). GTP is bound by residues 80 to 87 (GQSGLGKS) and Thr114. The tract at residues 137–140 (DTPG) is G3 motif. The tract at residues 219 to 222 (AKSD) is G4 motif. GTP is bound by residues 220-228 (KSDTLTPEE), Gly276, and Arg291. The interval 341–361 (NDNGGLHPISSSGHDTQESNL) is disordered. The span at 349–361 (ISSSGHDTQESNL) shows a compositional bias: polar residues.

The protein belongs to the TRAFAC class TrmE-Era-EngA-EngB-Septin-like GTPase superfamily. Septin GTPase family.

The protein localises to the cytoplasm. Its function is as follows. May be involved in cytokinesis. The chain is Neuronal-specific septin-3 from Danio rerio (Zebrafish).